Here is a 97-residue protein sequence, read N- to C-terminus: MKEPGPNFVTVRKGLHSFKMAFVKHLLLFLSPRLECSGSITDHCSLHLPVQEILMSQPPEQLGLQTNLGNQESSGMMKLFMPRPKVLAQYESIQFMP.

As to expression, expressed in numerous tissues; not found in breast, heart, small intestine and liver. Isoform 1: Predominantly expressed in the testis. Isoform 3: Predominantly expressed in the testis, at lower level in the placenta, during malignant progression of melanocytic tumors and in several tumors of varying origins. Isoform 4: Predominantly expressed in the testis, at lower level in the placenta, during malignant progression of melanocytic tumors and in several tumors of varying origins. Isoform 5: Predominantly expressed in the testis. Isoform 6: Predominantly expressed in the testis.

This is Down syndrome critical region protein 8 from Homo sapiens (Human).